A 670-amino-acid chain; its full sequence is DNA topoisomerase 6 subunit B (670 aa).

The segment at 1-30 (MAGDDLVETKKGSSKNSKDSNESKLKQKSP) is disordered. Basic and acidic residues predominate over residues 7–25 (VETKKGSSKNSKDSNESKL). ATP-binding positions include asparagine 60, aspartate 160, 181–182 (TK), 190–197 (GKFGLGAK), and lysine 516.

This sequence belongs to the TOP6B family. Homodimer. Heterotetramer of two TOP6A and two TOP6B subunits. Interacts with SPO11-2, but not with SPO11-1, RHL1 or BIN4. In terms of tissue distribution, highly expressed in leaves, stems, flowers and seedlings.

It localises to the nucleus. It carries out the reaction ATP-dependent breakage, passage and rejoining of double-stranded DNA.. Its function is as follows. Component of the DNA topoisomerase VI involved in chromatin organization and progression of endoreduplication cycles. Relaxes both positive and negative superturns and exhibits a strong decatenase activity. The B subunit binds ATP. Involved in cell-elongation processes. The protein is DNA topoisomerase 6 subunit B of Arabidopsis thaliana (Mouse-ear cress).